The primary structure comprises 512 residues: MFPLISFSPTSLDFTFFAIIISGFVFIITRWNSNSKKRLNLPPGPPGWPVVGNLFQFARSGKPFFEYAEDLKKTYGPIFTLRMGTRTMIILSDATLVHEALIQRGALFASRPAENPTRTIFSCNKFTVNAAKYGPVWRSLRRNMVQNMLSSTRLKEFGKLRQSAMDKLIERIKSEARDNDGLIWVLKNARFAAFCILLEMCFGIEMDEETIEKMDEILKTVLMTVDPRIDDYLPILAPFFSKERKRALEVRREQVDYVVGVIERRRRAIQNPGSDKTASSFSYLDTLFDLKIEGRKTTPSNEELVTLCSEFLNGGTDTTGTAIEWGIAQLIANPEIQSRLYDEIKSTVGDDRRVDEKDVDKMVFLQAFVKELLRKHPPTYFSLTHAVMETTTLAGYDIPAGVNVEVYLPGISEDPRIWNNPKKFDPDRFMLGKEDADITGISGVKMIPFGVGRRICPGLAMATIHVHLMLARMVQEFEWCAHPPGSEIDFAGKLEFTVVMKNPLRAMVKPRI.

The helical transmembrane segment at Pro-9–Thr-29 threads the bilayer. Cys-456 provides a ligand contact to heme.

The protein belongs to the cytochrome P450 family. The cofactor is heme.

It is found in the membrane. Functionally, catalyzes the epoxidation of physiological unsaturated fatty acids in vitro. Can use laurate, oleate, linoleate, linolenate and vernolate as substrate. The polypeptide is Cytochrome P450 77A4 (CYP77A4) (Arabidopsis thaliana (Mouse-ear cress)).